Reading from the N-terminus, the 336-residue chain is Biotin synthase (336 aa).

A Radical SAM core domain is found at 54-281 (NAIQLSTLLS…KAMVRLSAGR (228 aa)). The [4Fe-4S] cluster site is built by cysteine 69, cysteine 73, and cysteine 76. 4 residues coordinate [2Fe-2S] cluster: cysteine 113, cysteine 144, cysteine 204, and arginine 276.

The protein belongs to the radical SAM superfamily. Biotin synthase family. As to quaternary structure, homodimer. The cofactor is [4Fe-4S] cluster. [2Fe-2S] cluster is required as a cofactor.

It catalyses the reaction (4R,5S)-dethiobiotin + (sulfur carrier)-SH + 2 reduced [2Fe-2S]-[ferredoxin] + 2 S-adenosyl-L-methionine = (sulfur carrier)-H + biotin + 2 5'-deoxyadenosine + 2 L-methionine + 2 oxidized [2Fe-2S]-[ferredoxin]. Its pathway is cofactor biosynthesis; biotin biosynthesis; biotin from 7,8-diaminononanoate: step 2/2. Functionally, catalyzes the conversion of dethiobiotin (DTB) to biotin by the insertion of a sulfur atom into dethiobiotin via a radical-based mechanism. This Burkholderia mallei (strain ATCC 23344) protein is Biotin synthase.